The chain runs to 416 residues: uncharacterized protein (416 aa).

Residues Cys63, Cys75, Cys78, and Cys152 each coordinate [4Fe-4S] cluster. S-adenosyl-L-methionine is bound by residues Gln253, Phe280, Glu300, and Asp348. The active-site Nucleophile is Cys374.

This sequence belongs to the class I-like SAM-binding methyltransferase superfamily. RNA M5U methyltransferase family.

This is an uncharacterized protein from Agrobacterium fabrum (strain C58 / ATCC 33970) (Agrobacterium tumefaciens (strain C58)).